The primary structure comprises 268 residues: Interleukin-1 alpha (268 aa).

Positions 1-112 (MAKVPDLFED…DTEEEIIKPR (112 aa)) are excised as a propeptide. Lys-82 is subject to N6-acetyllysine. A nuclear localization signal (NLS) region spans residues 82 to 86 (KKRRL). At Ser-87 the chain carries Phosphoserine. N-linked (GlcNAc...) asparagine glycosylation is found at Asn-102 and Asn-141.

It belongs to the IL-1 family. Monomer. Interacts with TMED10; the interaction mediates the translocation from the cytoplasm into the ERGIC (endoplasmic reticulum-Golgi intermediate compartment) and thereby secretion. Interacts with IL1R1. Interacts with S100A13; this interaction is the first step in the export of IL1A, followed by direct translocation of this complex across the plasma membrane. Acetylated within its nuclear localization sequence, which impacts subcellular localization. In terms of processing, proteolytic processed by CAPN1 in a calcium-dependent manner. Cleavage from 31 kDa precursor to 18 kDa biologically active molecules. Post-translationally, phosphorylated. Phosphorylation greatly enhances susceptibility to digestion and promotes the conversion of pre-IL1A alpha to the biologically active IL1A.

The protein resides in the nucleus. The protein localises to the cytoplasm. Its subcellular location is the secreted. In terms of biological role, cytokine constitutively present intracellularly in nearly all resting non-hematopoietic cells that plays an important role in inflammation and bridges the innate and adaptive immune systems. After binding to its receptor IL1R1 together with its accessory protein IL1RAP, forms the high affinity interleukin-1 receptor complex. Signaling involves the recruitment of adapter molecules such as MYD88, IRAK1 or IRAK4. In turn, mediates the activation of NF-kappa-B and the three MAPK pathways p38, p42/p44 and JNK pathways. Within the cell, acts as an alarmin and cell death results in its liberation in the extracellular space after disruption of the cell membrane to induce inflammation and alert the host to injury or damage. In addition to its role as a danger signal, which occurs when the cytokine is passively released by cell necrosis, directly senses DNA damage and acts as signal for genotoxic stress without loss of cell integrity. This is Interleukin-1 alpha (IL1A) from Capra hircus (Goat).